A 269-amino-acid chain; its full sequence is Type III pantothenate kinase (269 aa).

9–16 (DVGNTSVK) lines the ATP pocket. Substrate is bound by residues Y106 and 113-116 (GADR). The active-site Proton acceptor is the D115. Position 137 (D137) interacts with K(+). T140 serves as a coordination point for ATP. T193 contacts substrate.

Belongs to the type III pantothenate kinase family. Homodimer. The cofactor is NH4(+). Requires K(+) as cofactor.

The protein localises to the cytoplasm. The enzyme catalyses (R)-pantothenate + ATP = (R)-4'-phosphopantothenate + ADP + H(+). Its pathway is cofactor biosynthesis; coenzyme A biosynthesis; CoA from (R)-pantothenate: step 1/5. In terms of biological role, catalyzes the phosphorylation of pantothenate (Pan), the first step in CoA biosynthesis. The chain is Type III pantothenate kinase from Lawsonia intracellularis (strain PHE/MN1-00).